The primary structure comprises 541 residues: 2-hydroxyacylsphingosine 1-beta-galactosyltransferase (541 aa).

A signal peptide spans 1–20; it reads MKSYTPYFMLLWSAVGIARA. N-linked (GlcNAc...) asparagine glycosylation is found at asparagine 78, asparagine 333, and asparagine 442. The chain crosses the membrane as a helical span at residues 472-492; sequence YFLLDIAFVLLLGAVALYFIV.

Belongs to the UDP-glycosyltransferase family. Brain, restricted to the oligodendrocyte-containing cell layers of cerebrum and cerebellum.

It localises to the membrane. It is found in the endoplasmic reticulum. It catalyses the reaction an N-acylsphing-4-enine + UDP-alpha-D-galactose = a beta-D-galactosyl-(1&lt;-&gt;1')-N-acylsphing-4-enine + UDP + H(+). The enzyme catalyses N-(2-hydroxy-hexanoyl)-sphing-4-enine + UDP-alpha-D-galactose = N-(2-hydroxy-hexanoyl)-beta-D-galactosyl-sphing-4-enine + UDP + H(+). The catalysed reaction is N-(2-hydroxy-hexanoyl)-sphinganine + UDP-alpha-D-galactose = N-(2-hydroxyhexanoyl)-beta-D-galactosylsphinganine + UDP + H(+). It carries out the reaction an N-acyl-sphingoid base + UDP-alpha-D-galactose = a D-galactosylceramide + UDP + H(+). It functions in the pathway sphingolipid metabolism; galactosylceramide biosynthesis. Functionally, catalyzes the transfer of galactose to ceramide, a key enzymatic step in the biosynthesis of galactocerebrosides, which are abundant sphingolipids of the myelin membrane of the central nervous system and peripheral nervous system. Galactosylates both hydroxy- and non-hydroxy fatty acid-containing ceramides and diglycerides. This chain is 2-hydroxyacylsphingosine 1-beta-galactosyltransferase, found in Rattus norvegicus (Rat).